We begin with the raw amino-acid sequence, 609 residues long: Threonine--tRNA ligase (609 aa).

Residues 1 to 145 (MRLLLIHSDY…TIVPGAGAAV (145 aa)) form an editing domain region. Residues 194–485 (IHVDLMRSKE…TANQSVPQLP (292 aa)) are catalytic. 3 residues coordinate Zn(2+): Cys286, His338, and His458.

The protein belongs to the class-II aminoacyl-tRNA synthetase family. Homodimer. Requires Zn(2+) as cofactor.

Its subcellular location is the cytoplasm. It carries out the reaction tRNA(Thr) + L-threonine + ATP = L-threonyl-tRNA(Thr) + AMP + diphosphate + H(+). Its function is as follows. Catalyzes the attachment of threonine to tRNA(Thr) in a two-step reaction: L-threonine is first activated by ATP to form Thr-AMP and then transferred to the acceptor end of tRNA(Thr). Also edits incorrectly charged L-seryl-tRNA(Thr). This is Threonine--tRNA ligase from Methanosphaerula palustris (strain ATCC BAA-1556 / DSM 19958 / E1-9c).